Here is a 368-residue protein sequence, read N- to C-terminus: UPF0284 protein Cyan7425_0342 (368 aa).

It belongs to the UPF0284 family.

The protein is UPF0284 protein Cyan7425_0342 of Cyanothece sp. (strain PCC 7425 / ATCC 29141).